Here is a 1171-residue protein sequence, read N- to C-terminus: DNA polymerase catalytic subunit (1171 aa).

Disordered regions lie at residues 647 to 687 (GTPA…PFRT), 704 to 735 (PGGG…EPAP), and 1149 to 1171 (VEEE…DSSR). A compositionally biased stretch (pro residues) spans 649–662 (PARPPETPARPPET). Composition is skewed to low complexity over residues 663-674 (PAAGPSGAAHAG) and 709-725 (VSSA…PSET). A compositionally biased stretch (basic and acidic residues) spans 1149–1158 (VEEEVCESER).

The protein belongs to the DNA polymerase type-B family.

Its subcellular location is the host nucleus. The enzyme catalyses DNA(n) + a 2'-deoxyribonucleoside 5'-triphosphate = DNA(n+1) + diphosphate. The polypeptide is DNA polymerase catalytic subunit (DPOL) (Tupaia belangeri (Common tree shrew)).